Consider the following 197-residue polypeptide: OV-16 antigen (197 aa).

A signal peptide spans 1-16; sequence MHCLQVVIAIVLYSFG. N-linked (GlcNAc...) asparagine glycosylation is found at N56, N61, N119, and N124.

The protein belongs to the phosphatidylethanolamine-binding protein family. As to expression, hypodermis, cuticle and uterus.

This Onchocerca volvulus protein is OV-16 antigen (OV16).